Consider the following 432-residue polypeptide: MQVSVETTQGLGRRVTITIAADSIENAVKSELVNVAKKVRIDGFRKGKVPMNIVAQRYGASVRQDVLGDLMSRHFVDAIIKEKINPAGAPNYVPGEYKLGEDFTYAVEFEVYPEVELQGLDAIEVEKPVVEVTDADVDTMLETLRKQQATWKEKEGAVDAEDRVTIDFTGSVDGEEFEGGKASDFVLAMGQGRMIPGFEDGIKGHKAGEEFTIDVTFPEEYHAENLKGKAAKFVINLKKVEERELPELTEEFIKRFGVEDGSVAGLRAEVRKNMERELKGAVRNRVKSQAIEGLVKANEIDVPAALIDSEIDVLRRQAAQRFGGNEKQALELPRELFEEQAKRRVVVGLLLGEVIRTNELKADEERVKALIEEMASAYEDPSEVVEFYSKNKELMDNMRNVALEEQAVEAVLAKAKVSEKATSFNELMNQQA.

The PPIase FKBP-type domain occupies 161-246 (EDRVTIDFTG…LKKVEERELP (86 aa)).

This sequence belongs to the FKBP-type PPIase family. Tig subfamily.

It is found in the cytoplasm. The enzyme catalyses [protein]-peptidylproline (omega=180) = [protein]-peptidylproline (omega=0). Its function is as follows. Involved in protein export. Acts as a chaperone by maintaining the newly synthesized protein in an open conformation. Functions as a peptidyl-prolyl cis-trans isomerase. The sequence is that of Trigger factor from Klebsiella pneumoniae subsp. pneumoniae (strain ATCC 700721 / MGH 78578).